A 582-amino-acid chain; its full sequence is mRNA-decapping enzyme 1A (582 aa).

Ser-62 carries the post-translational modification Phosphoserine. Basic and acidic residues predominate over residues 132–141 (RSQQAARDKQ). 2 disordered regions span residues 132–154 (RSQQ…DHRP) and 172–214 (QMGD…PSGH). Phosphoserine is present on residues Ser-142, Ser-179, Ser-180, Ser-315, Ser-319, and Ser-334. Polar residues predominate over residues 173 to 196 (MGDSNISSPGLQPSTQLSNLGSTE). Position 348 is a phosphothreonine (Thr-348). Ser-353 carries the phosphoserine modification. At Arg-376 the chain carries Asymmetric dimethylarginine. Thr-401 bears the Phosphothreonine mark. A phosphoserine mark is found at Ser-422, Ser-522, Ser-523, and Ser-525. The disordered stretch occupies residues 513–536 (RSSDLERKASSPSPLTIGTPESQR). Over residues 522 to 533 (SSPSPLTIGTPE) the composition is skewed to polar residues. Residues Thr-528 and Thr-531 each carry the phosphothreonine modification.

Belongs to the DCP1 family. In terms of assembly, (Microbial infection) Interacts with rotavirus A non-structural protein 2; this interaction probably plays a role in the sequestration of DCP1A in viral factories. Interacts with rotavirus A non-structural protein 5; this interaction probably plays a role in its sequestration in viral factories. Forms a complex with EDC3, DCP2, DDX6 and EDC4/HEDLS, within this complex directly interacts with EDC3. Part of a cytoplasmic complex containing proteins involved in mRNA decay, including XRN1 and LSM1. Interacts with DCP1B. Interacts with DCP2. Interacts with DDX17 in an RNA-independent manner. Interacts with PNRC2. Interacts with SMAD4. Interacts with UPF1. Interacts with ZC3HAV1. Interacts with ZFP36L1. Interacts with NBDY. Interacts with DHX34; the interaction is RNA-independent. Detected in heart, brain, placenta, lung, skeletal muscle, liver, kidney and pancreas.

The protein localises to the cytoplasm. It localises to the P-body. The protein resides in the nucleus. The catalysed reaction is a 5'-end (N(7)-methyl 5'-triphosphoguanosine)-ribonucleoside in mRNA + H2O = N(7)-methyl-GDP + a 5'-end phospho-ribonucleoside in mRNA + 2 H(+). Functionally, necessary for the degradation of mRNAs, both in normal mRNA turnover and in nonsense-mediated mRNA decay. Removes the 7-methyl guanine cap structure from mRNA molecules, yielding a 5'-phosphorylated mRNA fragment and 7m-GDP. Contributes to the transactivation of target genes after stimulation by TGFB1. Essential for embryonic development. In Homo sapiens (Human), this protein is mRNA-decapping enzyme 1A (DCP1A).